We begin with the raw amino-acid sequence, 189 residues long: Small ribosomal subunit protein uS5 (189 aa).

Positions 22–85 (FVDKLVAINR…EAAKRELIFV (64 aa)) constitute an S5 DRBM domain.

This sequence belongs to the universal ribosomal protein uS5 family. Part of the 30S ribosomal subunit. Contacts proteins S4 and S8.

In terms of biological role, with S4 and S12 plays an important role in translational accuracy. Its function is as follows. Located at the back of the 30S subunit body where it stabilizes the conformation of the head with respect to the body. This is Small ribosomal subunit protein uS5 from Rhizobium johnstonii (strain DSM 114642 / LMG 32736 / 3841) (Rhizobium leguminosarum bv. viciae).